The primary structure comprises 926 residues: Coatomer subunit beta'-2 (926 aa).

WD repeat units lie at residues 13-52 (QRSE…MAKS), 55-94 (VTEL…KVKV), 97-136 (AHSD…ACTQ), 140-180 (GHSH…PNFT), 183-224 (AHQK…CVQT), 227-266 (GHTH…LENT), 269-309 (YGLE…ASMD), 351-390 (TCDL…RSFG), and 461-501 (RIDV…SHFD). A disordered region spans residues 847–926 (EEESLENGDM…GTNNEGNPSA (80 aa)). Basic and acidic residues predominate over residues 868-887 (NEQRNEDDVAEHVEEHHEEK). Acidic residues predominate over residues 888 to 900 (EAEEEEGIVDGDS). The segment covering 917-926 (GTNNEGNPSA) has biased composition (polar residues).

It belongs to the WD repeat COPB2 family. Oligomeric complex that consists of at least the alpha, beta, beta', gamma, delta, epsilon and zeta subunits.

It is found in the cytoplasm. The protein localises to the golgi apparatus membrane. The protein resides in the cytoplasmic vesicle. Its subcellular location is the COPI-coated vesicle membrane. Functionally, the coatomer is a cytosolic protein complex that binds to dilysine motifs and reversibly associates with Golgi non-clathrin-coated vesicles, which further mediate biosynthetic protein transport from the ER, via the Golgi up to the trans Golgi network. Coatomer complex is required for budding from Golgi membranes, and is essential for the retrograde Golgi-to-ER transport of dilysine-tagged proteins. This Arabidopsis thaliana (Mouse-ear cress) protein is Coatomer subunit beta'-2.